The sequence spans 219 residues: uncharacterized protein (219 aa).

The disordered stretch occupies residues 42 to 71 (RQPRVVPVTSSDPEVVDDEDDEDQSDDSDE). Over residues 45–54 (RVVPVTSSDP) the composition is skewed to low complexity. Residues 55–71 (EVVDDEDDEDQSDDSDE) show a composition bias toward acidic residues.

This is an uncharacterized protein from Dryophytes versicolor (chameleon treefrog).